A 177-amino-acid chain; its full sequence is ATP synthase subunit delta (177 aa).

This sequence belongs to the ATPase delta chain family. F-type ATPases have 2 components, F(1) - the catalytic core - and F(0) - the membrane proton channel. F(1) has five subunits: alpha(3), beta(3), gamma(1), delta(1), epsilon(1). F(0) has three main subunits: a(1), b(2) and c(10-14). The alpha and beta chains form an alternating ring which encloses part of the gamma chain. F(1) is attached to F(0) by a central stalk formed by the gamma and epsilon chains, while a peripheral stalk is formed by the delta and b chains.

It localises to the cell inner membrane. F(1)F(0) ATP synthase produces ATP from ADP in the presence of a proton or sodium gradient. F-type ATPases consist of two structural domains, F(1) containing the extramembraneous catalytic core and F(0) containing the membrane proton channel, linked together by a central stalk and a peripheral stalk. During catalysis, ATP synthesis in the catalytic domain of F(1) is coupled via a rotary mechanism of the central stalk subunits to proton translocation. In terms of biological role, this protein is part of the stalk that links CF(0) to CF(1). It either transmits conformational changes from CF(0) to CF(1) or is implicated in proton conduction. This Flavobacterium psychrophilum (strain ATCC 49511 / DSM 21280 / CIP 103535 / JIP02/86) protein is ATP synthase subunit delta.